The primary structure comprises 62 residues: Large ribosomal subunit protein bL32 (62 aa).

Positions 1 to 18 are enriched in basic residues; the sequence is MGVPKKRTSKMRRDRRRA. Residues 1 to 22 are disordered; the sequence is MGVPKKRTSKMRRDRRRAANNN.

It belongs to the bacterial ribosomal protein bL32 family.

In Myxococcus xanthus (strain DK1622), this protein is Large ribosomal subunit protein bL32.